The chain runs to 291 residues: Protease HtpX (291 aa).

2 helical membrane-spanning segments follow: residues 4–24 (IALF…VLNI) and 36–56 (LSGL…ISLM). His-143 provides a ligand contact to Zn(2+). The active site involves Glu-144. A Zn(2+)-binding site is contributed by His-147. The next 2 membrane-spanning stretches (helical) occupy residues 151–171 (GDMI…IFLS) and 199–219 (FIVS…LTMW). Glu-225 is a Zn(2+) binding site.

Belongs to the peptidase M48B family. The cofactor is Zn(2+).

It localises to the cell inner membrane. The sequence is that of Protease HtpX from Aliivibrio fischeri (strain MJ11) (Vibrio fischeri).